Here is a 195-residue protein sequence, read N- to C-terminus: uncharacterized protein (195 aa).

The first 20 residues, Met-1–Gly-20, serve as a signal peptide directing secretion. The tract at residues Ile-26–Asn-195 is disordered. The N-linked (GlcNAc...) asparagine glycan is linked to Asn-28. 2 stretches are compositionally biased toward low complexity: residues Lys-29–Ser-43 and Gln-74–Gln-104. 2 stretches are compositionally biased toward polar residues: residues Asp-112–Tyr-123 and Pro-151–Pro-176.

In terms of tissue distribution, component of the acid-soluble organic matrix of calcified layers of the shell (at protein level).

Its subcellular location is the secreted. This is an uncharacterized protein from Lottia gigantea (Giant owl limpet).